A 78-amino-acid polypeptide reads, in one-letter code: Small ribosomal subunit protein bS16c (78 aa).

The protein belongs to the bacterial ribosomal protein bS16 family.

The protein resides in the plastid. Its subcellular location is the chloroplast. The chain is Small ribosomal subunit protein bS16c from Gracilaria tenuistipitata var. liui (Red alga).